The chain runs to 616 residues: Glutamine--fructose-6-phosphate aminotransferase [isomerizing] (616 aa).

The active-site Nucleophile; for GATase activity is the cysteine 2. In terms of domain architecture, Glutamine amidotransferase type-2 spans 2–222 (CGIIGYSGPR…QERIVALSGD (221 aa)). A disordered region spans residues 70 to 89 (TGIGHTRWATHGEPSDRNAH). 2 consecutive SIS domains span residues 289 to 428 (IRDD…LRGF) and 461 to 606 (LAHW…VDRP). Catalysis depends on lysine 611, which acts as the For Fru-6P isomerization activity.

As to quaternary structure, homodimer.

The protein localises to the cytoplasm. It carries out the reaction D-fructose 6-phosphate + L-glutamine = D-glucosamine 6-phosphate + L-glutamate. Functionally, catalyzes the first step in hexosamine metabolism, converting fructose-6P into glucosamine-6P using glutamine as a nitrogen source. The sequence is that of Glutamine--fructose-6-phosphate aminotransferase [isomerizing] from Tropheryma whipplei (strain Twist) (Whipple's bacillus).